Reading from the N-terminus, the 395-residue chain is Imidazolonepropionase (395 aa).

Positions 63 and 65 each coordinate Fe(3+). 2 residues coordinate Zn(2+): His63 and His65. Positions 72, 135, and 168 each coordinate 4-imidazolone-5-propanoate. Tyr135 lines the N-formimidoyl-L-glutamate pocket. His233 is a binding site for Fe(3+). Residue His233 coordinates Zn(2+). 4-imidazolone-5-propanoate is bound at residue Gln236. Residue Asp308 participates in Fe(3+) binding. Asp308 is a Zn(2+) binding site. Asn310 and Gly312 together coordinate N-formimidoyl-L-glutamate. Thr313 is a binding site for 4-imidazolone-5-propanoate.

The protein belongs to the metallo-dependent hydrolases superfamily. HutI family. The cofactor is Zn(2+). It depends on Fe(3+) as a cofactor.

The protein resides in the cytoplasm. The enzyme catalyses 4-imidazolone-5-propanoate + H2O = N-formimidoyl-L-glutamate. It functions in the pathway amino-acid degradation; L-histidine degradation into L-glutamate; N-formimidoyl-L-glutamate from L-histidine: step 3/3. In terms of biological role, catalyzes the hydrolytic cleavage of the carbon-nitrogen bond in imidazolone-5-propanoate to yield N-formimidoyl-L-glutamate. It is the third step in the universal histidine degradation pathway. The polypeptide is Imidazolonepropionase (Cereibacter sphaeroides (strain KD131 / KCTC 12085) (Rhodobacter sphaeroides)).